The following is a 1298-amino-acid chain: Phosphoribosylformylglycinamidine synthase (1298 aa).

The disordered stretch occupies residues 303 to 327 (FPGAATGSGGEIRDEGATGRGAKPK). ATP is bound by residues 305–316 (GAATGSGGEIRD), 384–386 (TGY), and A676. 4 residues coordinate Mg(2+): D677, E716, N720, and D884. An ATP-binding site is contributed by S886. Positions 1045–1298 (VAVLREQGVN…MFRNARAWVN (254 aa)) constitute a Glutamine amidotransferase type-1 domain. The Nucleophile role is filled by C1138. Residues H1263 and E1265 contribute to the active site.

This sequence in the N-terminal section; belongs to the FGAMS family. As to quaternary structure, monomer.

The protein resides in the cytoplasm. It carries out the reaction N(2)-formyl-N(1)-(5-phospho-beta-D-ribosyl)glycinamide + L-glutamine + ATP + H2O = 2-formamido-N(1)-(5-O-phospho-beta-D-ribosyl)acetamidine + L-glutamate + ADP + phosphate + H(+). Its pathway is purine metabolism; IMP biosynthesis via de novo pathway; 5-amino-1-(5-phospho-D-ribosyl)imidazole from N(2)-formyl-N(1)-(5-phospho-D-ribosyl)glycinamide: step 1/2. Its function is as follows. Phosphoribosylformylglycinamidine synthase involved in the purines biosynthetic pathway. Catalyzes the ATP-dependent conversion of formylglycinamide ribonucleotide (FGAR) and glutamine to yield formylglycinamidine ribonucleotide (FGAM) and glutamate. In Pseudomonas syringae pv. syringae (strain B728a), this protein is Phosphoribosylformylglycinamidine synthase.